The chain runs to 313 residues: MVFHHIPVLLHQVLEVLKPRPEGVYLDGTVGGGGHSAAILQKLSGRGRVIGLDQDPAALAAAGRKLASFGDRVTLVRSNFRHIGAVVAELGLTGKIDGILLDIGVSSHQLDEAERGFTYRMDAPLDMRMNPESALTASKLLNEAPEGEIARILRDYGEERWAKRIAQFIVKRRALQPLERTGELVDIIRAAIPAAARQEGGHPAKRTFQALRIAVNDELGALEEALPAALEALAPGGRLAVISFHSLEDRIVKSFFAEQARGCLCPPDFPVCACGNRPKVKIITKKPLVGSDEEMRANPRAQSAKLRAAEKIR.

Residues 33–35 (GGH), Asp53, Phe80, Asp102, and Gln109 contribute to the S-adenosyl-L-methionine site. A disordered region spans residues 291 to 313 (SDEEMRANPRAQSAKLRAAEKIR).

This sequence belongs to the methyltransferase superfamily. RsmH family.

The protein localises to the cytoplasm. It carries out the reaction cytidine(1402) in 16S rRNA + S-adenosyl-L-methionine = N(4)-methylcytidine(1402) in 16S rRNA + S-adenosyl-L-homocysteine + H(+). Its function is as follows. Specifically methylates the N4 position of cytidine in position 1402 (C1402) of 16S rRNA. This Heliobacterium modesticaldum (strain ATCC 51547 / Ice1) protein is Ribosomal RNA small subunit methyltransferase H.